The chain runs to 637 residues: Glutamate--cysteine ligase catalytic subunit (637 aa).

Met-1 carries the N-acetylmethionine modification. Residues Ser-5 and Ser-8 each carry the phosphoserine modification.

It belongs to the glutamate--cysteine ligase type 3 family. In terms of assembly, heterodimer of a catalytic heavy chain and a regulatory light chain. In terms of tissue distribution, most abundant in kidney. Also found in liver and testis.

The enzyme catalyses L-cysteine + L-glutamate + ATP = gamma-L-glutamyl-L-cysteine + ADP + phosphate + H(+). It carries out the reaction (2S)-2-aminobutanoate + L-glutamate + ATP = gamma-L-glutamyl-(2S)-2-aminobutanoate + ADP + phosphate + H(+). It functions in the pathway sulfur metabolism; glutathione biosynthesis; glutathione from L-cysteine and L-glutamate: step 1/2. Feedback inhibition by glutathione. Its function is as follows. Catalyzes the ATP-dependent ligation of L-glutamate and L-cysteine and participates in the first and rate-limiting step in glutathione biosynthesis. This chain is Glutamate--cysteine ligase catalytic subunit, found in Rattus norvegicus (Rat).